An 89-amino-acid chain; its full sequence is Small ribosomal subunit protein uS15 (89 aa).

This sequence belongs to the universal ribosomal protein uS15 family. As to quaternary structure, part of the 30S ribosomal subunit. Forms a bridge to the 50S subunit in the 70S ribosome, contacting the 23S rRNA.

One of the primary rRNA binding proteins, it binds directly to 16S rRNA where it helps nucleate assembly of the platform of the 30S subunit by binding and bridging several RNA helices of the 16S rRNA. Its function is as follows. Forms an intersubunit bridge (bridge B4) with the 23S rRNA of the 50S subunit in the ribosome. This is Small ribosomal subunit protein uS15 from Vibrio vulnificus (strain YJ016).